The following is a 472-amino-acid chain: Aspartyl/glutamyl-tRNA(Asn/Gln) amidotransferase subunit B (472 aa).

This sequence belongs to the GatB/GatE family. GatB subfamily. Heterotrimer of A, B and C subunits.

The enzyme catalyses L-glutamyl-tRNA(Gln) + L-glutamine + ATP + H2O = L-glutaminyl-tRNA(Gln) + L-glutamate + ADP + phosphate + H(+). It catalyses the reaction L-aspartyl-tRNA(Asn) + L-glutamine + ATP + H2O = L-asparaginyl-tRNA(Asn) + L-glutamate + ADP + phosphate + 2 H(+). Allows the formation of correctly charged Asn-tRNA(Asn) or Gln-tRNA(Gln) through the transamidation of misacylated Asp-tRNA(Asn) or Glu-tRNA(Gln) in organisms which lack either or both of asparaginyl-tRNA or glutaminyl-tRNA synthetases. The reaction takes place in the presence of glutamine and ATP through an activated phospho-Asp-tRNA(Asn) or phospho-Glu-tRNA(Gln). The sequence is that of Aspartyl/glutamyl-tRNA(Asn/Gln) amidotransferase subunit B from Campylobacter jejuni subsp. jejuni serotype O:2 (strain ATCC 700819 / NCTC 11168).